The sequence spans 266 residues: UPF0294 protein YafD (266 aa).

This sequence belongs to the UPF0294 family.

Its subcellular location is the cytoplasm. This chain is UPF0294 protein YafD, found in Salmonella dublin (strain CT_02021853).